A 471-amino-acid chain; its full sequence is Glutamate--tRNA ligase (471 aa).

Residues 9–19 (PSPTGYLHVGG) carry the 'HIGH' region motif. 4 residues coordinate Zn(2+): C98, C100, C125, and H127. The short motif at 237–241 (KLSKR) is the 'KMSKS' region element. K240 serves as a coordination point for ATP.

This sequence belongs to the class-I aminoacyl-tRNA synthetase family. Glutamate--tRNA ligase type 1 subfamily. Monomer. Requires Zn(2+) as cofactor.

It localises to the cytoplasm. It carries out the reaction tRNA(Glu) + L-glutamate + ATP = L-glutamyl-tRNA(Glu) + AMP + diphosphate. Catalyzes the attachment of glutamate to tRNA(Glu) in a two-step reaction: glutamate is first activated by ATP to form Glu-AMP and then transferred to the acceptor end of tRNA(Glu). The chain is Glutamate--tRNA ligase from Escherichia coli O157:H7.